Reading from the N-terminus, the 1377-residue chain is Endoribonuclease Dicer homolog 2b (1377 aa).

Gly residues predominate over residues 1–15; it reads MGGPLTAAGGRGDGG. Residues 1-30 are disordered; that stretch reads MGGPLTAAGGRGDGGAKAVEPLRPPPPPDP. Residues 41–222 form the Helicase ATP-binding domain; that stretch reads ALERAVRGNT…HNYSKQISEI (182 aa). 54 to 61 is an ATP binding site; that stretch reads LETGSGKT. A DECH box motif is present at residues 163 to 166; sequence DECH. The Helicase C-terminal domain maps to 388–561; sequence TLLQYRHMQD…DTYYRVESTP (174 aa). Residues 534-626 form the Dicer dsRNA-binding fold domain; sequence SLRLGSISCQ…LPELDVPCDE (93 aa). Residues 798 to 913 enclose the PAZ domain; it reads RDIDLLQTKD…LPPELCRIIM (116 aa). RNase III domains follow at residues 940-1095 and 1132-1276; these read SVKL…STAG and VRSL…LDSK. Mg(2+)-binding residues include glutamate 1171, aspartate 1262, and glutamate 1265. The DRBM domain occupies 1302–1367; that stretch reads DPVKGLQEFC…SKAVLKDLIA (66 aa).

The protein belongs to the helicase family. Dicer subfamily. As to quaternary structure, may interact with ARGONAUTE1 or PINHEAD through their common PAZ domains. It depends on Mg(2+) as a cofactor. Mn(2+) is required as a cofactor.

The protein localises to the nucleus. Functionally, probably involved in the RNA silencing pathway. May cleave double-stranded RNA to produce short 21-24 nucleotides (nt) RNAs which target the selective destruction of complementary RNAs. This is Endoribonuclease Dicer homolog 2b (DCL2B) from Oryza sativa subsp. japonica (Rice).